The following is a 628-amino-acid chain: Carbon monoxide dehydrogenase 1 (628 aa).

[4Fe-4S] cluster-binding residues include cysteine 44, cysteine 52, cysteine 53, cysteine 56, cysteine 61, and cysteine 75. The [Ni-4Fe-5S] cluster site is built by histidine 266, cysteine 302, cysteine 340, cysteine 448, cysteine 478, and cysteine 519.

This sequence belongs to the Ni-containing carbon monoxide dehydrogenase family. As to quaternary structure, homodimer. The cofactor is [4Fe-4S] cluster. Requires [Ni-4Fe-5S] cluster as cofactor.

It carries out the reaction CO + 2 oxidized [2Fe-2S]-[ferredoxin] + H2O = 2 reduced [2Fe-2S]-[ferredoxin] + CO2 + 2 H(+). CODH oxidizes carbon monoxide coupled, via CooF, to the reduction of a hydrogen cation by a hydrogenase (possibly CooH). This chain is Carbon monoxide dehydrogenase 1 (cooS1), found in Methanosarcina acetivorans (strain ATCC 35395 / DSM 2834 / JCM 12185 / C2A).